Here is a 270-residue protein sequence, read N- to C-terminus: UPF0354 protein Bcer98_3354 (270 aa).

This sequence belongs to the UPF0354 family.

The protein is UPF0354 protein Bcer98_3354 of Bacillus cytotoxicus (strain DSM 22905 / CIP 110041 / 391-98 / NVH 391-98).